Consider the following 277-residue polypeptide: Putative phosphoenolpyruvate synthase regulatory protein (277 aa).

Position 152–159 (152–159 (GVSRCGKT)) interacts with ADP.

Belongs to the pyruvate, phosphate/water dikinase regulatory protein family. PSRP subfamily.

It catalyses the reaction [pyruvate, water dikinase] + ADP = [pyruvate, water dikinase]-phosphate + AMP + H(+). The enzyme catalyses [pyruvate, water dikinase]-phosphate + phosphate + H(+) = [pyruvate, water dikinase] + diphosphate. Its function is as follows. Bifunctional serine/threonine kinase and phosphorylase involved in the regulation of the phosphoenolpyruvate synthase (PEPS) by catalyzing its phosphorylation/dephosphorylation. The sequence is that of Putative phosphoenolpyruvate synthase regulatory protein from Chromohalobacter salexigens (strain ATCC BAA-138 / DSM 3043 / CIP 106854 / NCIMB 13768 / 1H11).